Consider the following 353-residue polypeptide: UDP-N-acetylglucosamine--N-acetylmuramyl-(pentapeptide) pyrophosphoryl-undecaprenol N-acetylglucosamine transferase (353 aa).

UDP-N-acetyl-alpha-D-glucosamine contacts are provided by residues 14 to 16, Asn126, Arg162, Ser190, Ile243, 262 to 267, and Gln287; these read TGG and ALTVSE.

Belongs to the glycosyltransferase 28 family. MurG subfamily.

The protein resides in the cell inner membrane. The enzyme catalyses di-trans,octa-cis-undecaprenyl diphospho-N-acetyl-alpha-D-muramoyl-L-alanyl-D-glutamyl-meso-2,6-diaminopimeloyl-D-alanyl-D-alanine + UDP-N-acetyl-alpha-D-glucosamine = di-trans,octa-cis-undecaprenyl diphospho-[N-acetyl-alpha-D-glucosaminyl-(1-&gt;4)]-N-acetyl-alpha-D-muramoyl-L-alanyl-D-glutamyl-meso-2,6-diaminopimeloyl-D-alanyl-D-alanine + UDP + H(+). Its pathway is cell wall biogenesis; peptidoglycan biosynthesis. Its function is as follows. Cell wall formation. Catalyzes the transfer of a GlcNAc subunit on undecaprenyl-pyrophosphoryl-MurNAc-pentapeptide (lipid intermediate I) to form undecaprenyl-pyrophosphoryl-MurNAc-(pentapeptide)GlcNAc (lipid intermediate II). This is UDP-N-acetylglucosamine--N-acetylmuramyl-(pentapeptide) pyrophosphoryl-undecaprenol N-acetylglucosamine transferase from Vibrio atlanticus (strain LGP32) (Vibrio splendidus (strain Mel32)).